Consider the following 460-residue polypeptide: Argininosuccinate lyase (460 aa).

This sequence belongs to the lyase 1 family. Argininosuccinate lyase subfamily.

Its subcellular location is the cytoplasm. It catalyses the reaction 2-(N(omega)-L-arginino)succinate = fumarate + L-arginine. It participates in amino-acid biosynthesis; L-arginine biosynthesis; L-arginine from L-ornithine and carbamoyl phosphate: step 3/3. The protein is Argininosuccinate lyase of Limosilactobacillus fermentum (strain NBRC 3956 / LMG 18251) (Lactobacillus fermentum).